A 466-amino-acid polypeptide reads, in one-letter code: Uronate isomerase (466 aa).

This sequence belongs to the metallo-dependent hydrolases superfamily. Uronate isomerase family.

It carries out the reaction D-glucuronate = D-fructuronate. The enzyme catalyses aldehydo-D-galacturonate = keto-D-tagaturonate. It functions in the pathway carbohydrate metabolism; pentose and glucuronate interconversion. This Brucella suis (strain ATCC 23445 / NCTC 10510) protein is Uronate isomerase.